The sequence spans 33 residues: Neurotoxin Nk-3FTx (33 aa).

Cystine bridges form between C3/C24 and C6/C11.

As to expression, expressed by the venom gland.

It localises to the secreted. Functionally, possible voltage-gated potassium channel (Kv) blocker. Decreases amplitude of compound action potential and conduction velocity in toad sciatic nerve. Has only mild anticoagulant activity even at a concentration of 5ug/ml. Shows no cytotoxicity towards human cell lines. The protein is Neurotoxin Nk-3FTx of Naja kaouthia (Monocled cobra).